An 874-amino-acid polypeptide reads, in one-letter code: Alanine--tRNA ligase (874 aa).

H564, H568, C665, and H669 together coordinate Zn(2+).

This sequence belongs to the class-II aminoacyl-tRNA synthetase family. The cofactor is Zn(2+).

The protein resides in the cytoplasm. It carries out the reaction tRNA(Ala) + L-alanine + ATP = L-alanyl-tRNA(Ala) + AMP + diphosphate. Catalyzes the attachment of alanine to tRNA(Ala) in a two-step reaction: alanine is first activated by ATP to form Ala-AMP and then transferred to the acceptor end of tRNA(Ala). Also edits incorrectly charged Ser-tRNA(Ala) and Gly-tRNA(Ala) via its editing domain. The sequence is that of Alanine--tRNA ligase from Acidovorax sp. (strain JS42).